Consider the following 349-residue polypeptide: UDP-3-O-acylglucosamine N-acyltransferase (349 aa).

The active-site Proton acceptor is the histidine 243.

This sequence belongs to the transferase hexapeptide repeat family. LpxD subfamily. Homotrimer.

The enzyme catalyses a UDP-3-O-[(3R)-3-hydroxyacyl]-alpha-D-glucosamine + a (3R)-hydroxyacyl-[ACP] = a UDP-2-N,3-O-bis[(3R)-3-hydroxyacyl]-alpha-D-glucosamine + holo-[ACP] + H(+). The protein operates within bacterial outer membrane biogenesis; LPS lipid A biosynthesis. In terms of biological role, catalyzes the N-acylation of UDP-3-O-acylglucosamine using 3-hydroxyacyl-ACP as the acyl donor. Is involved in the biosynthesis of lipid A, a phosphorylated glycolipid that anchors the lipopolysaccharide to the outer membrane of the cell. The chain is UDP-3-O-acylglucosamine N-acyltransferase from Myxococcus xanthus (strain DK1622).